The primary structure comprises 179 residues: Large ribosomal subunit protein uL5 (179 aa).

Belongs to the universal ribosomal protein uL5 family. Part of the 50S ribosomal subunit; part of the 5S rRNA/L5/L18/L25 subcomplex. Contacts the 5S rRNA and the P site tRNA. Forms a bridge to the 30S subunit in the 70S ribosome.

Its function is as follows. This is one of the proteins that bind and probably mediate the attachment of the 5S RNA into the large ribosomal subunit, where it forms part of the central protuberance. In the 70S ribosome it contacts protein S13 of the 30S subunit (bridge B1b), connecting the 2 subunits; this bridge is implicated in subunit movement. Contacts the P site tRNA; the 5S rRNA and some of its associated proteins might help stabilize positioning of ribosome-bound tRNAs. The chain is Large ribosomal subunit protein uL5 from Aeromonas salmonicida (strain A449).